A 130-amino-acid polypeptide reads, in one-letter code: Iron-sulfur cluster assembly 1 homolog, mitochondrial (130 aa).

The transit peptide at 1–24 directs the protein to the mitochondrion; sequence MATRVVATATVRAVKGRKLIPTRA. Fe cation is bound by residues Cys-58, Cys-122, and Cys-124.

Belongs to the HesB/IscA family. As to quaternary structure, interacts with cry. In terms of tissue distribution, detected in head.

The protein localises to the mitochondrion. Involved in the assembly of mitochondrial iron-sulfur proteins. Probably involved in the binding of an intermediate of Fe/S cluster assembly. Required for maintenance of circadian rhythms under constant darkness. In Drosophila melanogaster (Fruit fly), this protein is Iron-sulfur cluster assembly 1 homolog, mitochondrial.